The chain runs to 892 residues: DNA mismatch repair protein MutS (892 aa).

Position 634 to 641 (634 to 641 (GPNMGGKS)) interacts with ATP.

Belongs to the DNA mismatch repair MutS family.

Its function is as follows. This protein is involved in the repair of mismatches in DNA. It is possible that it carries out the mismatch recognition step. This protein has a weak ATPase activity. The polypeptide is DNA mismatch repair protein MutS (Paraburkholderia phymatum (strain DSM 17167 / CIP 108236 / LMG 21445 / STM815) (Burkholderia phymatum)).